Reading from the N-terminus, the 211-residue chain is Protein CHLORORESPIRATORY REDUCTION 41, chloroplastic (211 aa).

The transit peptide at 1–38 directs the protein to the chloroplast; sequence MASTSTLLLPSLSSKNLHIAVPIRTNSFVRRTTKFSTK. A coiled-coil region spans residues 136-163; it reads AKAGEIVAERAREEAEVLRDEGKVEERM.

Biogenesis factor component of the plastidial NDH subcomplex A.

The protein localises to the plastid. It is found in the chloroplast. Its subcellular location is the chloroplast stroma. Functionally, required for both formation and activity of the chloroplast NAD(P)H dehydrogenase (NDH) complex of the photosynthetic electron transport chain. Functions in assembly or stabilization of the NDH complex; probably involved, together with NdhO and NdhH, in the formation of an NDH subcomplex A assembly intermediate (NAI500). The chain is Protein CHLORORESPIRATORY REDUCTION 41, chloroplastic from Arabidopsis thaliana (Mouse-ear cress).